A 287-amino-acid polypeptide reads, in one-letter code: MSTASQHLYKRRRLINATAITISCIAALFGLFFLIWILWTLISKGLPGIGLDLFTKITPPPMQKGGLANAFFGSAIMCLLAIVIGTPLGIAAGTWLAEYGNTSKTSAVVRFVNDILLSAPSIVLGLFVYTLYVMHTGGHFSAFSGALALVFIVLPIVVRTTDEMLRLVPGQMREAALSLGIPQWKMIIQVLYRSASAGILTGILLALARISGETAPLLFTAFGNQYWSSNIFQPIASLPLVMNQFASSPYKSWQLLAWSGALVLTVFVLLVSLGARTLLLRNKIPNE.

Helical transmembrane passes span 22 to 42, 70 to 90, 115 to 135, 138 to 158, 187 to 207, and 255 to 275; these read ISCIAALFGLFFLIWILWTLI, AFFGSAIMCLLAIVIGTPLGI, ILLSAPSIVLGLFVYTLYVMH, GHFSAFSGALALVFIVLPIVV, IIQVLYRSASAGILTGILLAL, and LLAWSGALVLTVFVLLVSLGA. The ABC transmembrane type-1 domain occupies 71-275; the sequence is FFGSAIMCLL…VFVLLVSLGA (205 aa).

The protein belongs to the binding-protein-dependent transport system permease family. CysTW subfamily.

The protein resides in the cell inner membrane. Its function is as follows. Part of a binding-protein-dependent transport system for phosphate; probably responsible for the translocation of the substrate across the membrane. This is Phosphate transport system permease protein PstA (pstA) from Xylella fastidiosa (strain 9a5c).